A 307-amino-acid chain; its full sequence is tRNA dimethylallyltransferase 2 (307 aa).

11–18 (GPTASGKT) is an ATP binding site. 13-18 (TASGKT) is a substrate binding site. The interaction with substrate tRNA stretch occupies residues 36–39 (DSRQ).

The protein belongs to the IPP transferase family. In terms of assembly, monomer. Requires Mg(2+) as cofactor.

The catalysed reaction is adenosine(37) in tRNA + dimethylallyl diphosphate = N(6)-dimethylallyladenosine(37) in tRNA + diphosphate. Functionally, catalyzes the transfer of a dimethylallyl group onto the adenine at position 37 in tRNAs that read codons beginning with uridine, leading to the formation of N6-(dimethylallyl)adenosine (i(6)A). In Phocaeicola vulgatus (strain ATCC 8482 / DSM 1447 / JCM 5826 / CCUG 4940 / NBRC 14291 / NCTC 11154) (Bacteroides vulgatus), this protein is tRNA dimethylallyltransferase 2.